We begin with the raw amino-acid sequence, 365 residues long: Mitogen-activated protein kinase p38b (365 aa).

In terms of domain architecture, Protein kinase spans 24-311; sequence YQNLQPVGQG…AEQALAHPYM (288 aa). Residues 30 to 38 and Lys-53 contribute to the ATP site; that span reads VGQGAYGQV. The Proton acceptor role is filled by Asp-153. Thr-183 is subject to Phosphothreonine. The short motif at 183–185 is the TXY element; the sequence is TGY. The residue at position 185 (Tyr-185) is a Phosphotyrosine.

Belongs to the protein kinase superfamily. CMGC Ser/Thr protein kinase family. MAP kinase subfamily. Mg(2+) is required as a cofactor. Dually phosphorylated on Thr-183 and Tyr-185, which activates the enzyme. At mid-embryogenesis, highest expression is seen in developing anterior and posterior midguts. Almost ubiquitous expression throughout all development.

The protein localises to the nucleus. It carries out the reaction L-seryl-[protein] + ATP = O-phospho-L-seryl-[protein] + ADP + H(+). The enzyme catalyses L-threonyl-[protein] + ATP = O-phospho-L-threonyl-[protein] + ADP + H(+). With respect to regulation, activated by threonine and tyrosine phosphorylation by Mkk3. Its function is as follows. Kinase involved in dpp signal transduction pathway in the process of wing morphogenesis when the levels of dpp are enhanced or inhibited. May down-regulate insect immunity gene expression after prolonged infection. In Drosophila melanogaster (Fruit fly), this protein is Mitogen-activated protein kinase p38b.